A 450-amino-acid polypeptide reads, in one-letter code: MDTIVAVATPPGKGAIAILRLSGPDSWKIVQKHLRTRSKIVPRKAIHGWIHENGEDVDEVVVVFYKSPKSYTGEDMVEVMCHGGPLVVKKLLDLFLKSGARMAEPGEFTKRAFLNGKMDLTSAEAVRDLIEAKSETSLKLSLRNLKGGLRDFVDSLRRELIEVLAEIRVELDYPDEIETNTGEVVTRLERIKEKLTEELKKADAGILLNRGLRMVIVGKPNVGKSTLLNRLLNEDRAIVTDIPGTTRDVISEEIVIRGILFRIVDTAGVRSETNDLVERLGIERTLQEIEKADIVLFVLDASSPLDEEDRKILERIKNKRYLVVINKVDVVEKINEEEIKNKLGTDRHMVKISALKGEGLEKLEESIYRETQEIFERGSDSLITNLRQKQLLENVKGYLEDAIKSLKEGMPVDMASIDLERALNLLDEVTGRSFREDLLDTIFSNFCVGK.

Positions 20, 78, and 117 each coordinate (6S)-5-formyl-5,6,7,8-tetrahydrofolate. One can recognise a TrmE-type G domain in the interval 211-372 (GLRMVIVGKP…LEESIYRETQ (162 aa)). Asn221 provides a ligand contact to K(+). Residues 221–226 (NVGKST), 240–246 (TDIPGTT), and 265–268 (DTAG) contribute to the GTP site. Ser225 provides a ligand contact to Mg(2+). K(+) is bound by residues Thr240, Ile242, and Thr245. Thr246 contacts Mg(2+). Lys450 lines the (6S)-5-formyl-5,6,7,8-tetrahydrofolate pocket.

This sequence belongs to the TRAFAC class TrmE-Era-EngA-EngB-Septin-like GTPase superfamily. TrmE GTPase family. As to quaternary structure, homodimer. Heterotetramer of two MnmE and two MnmG subunits. K(+) serves as cofactor.

It localises to the cytoplasm. Exhibits a very high intrinsic GTPase hydrolysis rate. Involved in the addition of a carboxymethylaminomethyl (cmnm) group at the wobble position (U34) of certain tRNAs, forming tRNA-cmnm(5)s(2)U34. The protein is tRNA modification GTPase MnmE of Thermotoga sp. (strain RQ2).